Here is a 324-residue protein sequence, read N- to C-terminus: Muscleblind-like protein (324 aa).

C3H1-type zinc fingers lie at residues 38 to 66 (WLQVEVCREFLRGQCARSDQECKFAHPPP) and 72 to 100 (QGRVTACYDSIKGRCTRENPKCKYLHPPQ).

This sequence belongs to the muscleblind family. Expressed in neurons around the pharynx.

Its subcellular location is the nucleus. Functionally, binds to RNA with repeat sequences 5'-CUG-3' and 5'-CCUG-3'. This is Muscleblind-like protein (mbl-1) from Caenorhabditis elegans.